Consider the following 357-residue polypeptide: Peptide chain release factor 1 (357 aa).

Glutamine 232 carries the N5-methylglutamine modification.

This sequence belongs to the prokaryotic/mitochondrial release factor family. In terms of processing, methylated by PrmC. Methylation increases the termination efficiency of RF1.

It localises to the cytoplasm. Its function is as follows. Peptide chain release factor 1 directs the termination of translation in response to the peptide chain termination codons UAG and UAA. In Maridesulfovibrio salexigens (strain ATCC 14822 / DSM 2638 / NCIMB 8403 / VKM B-1763) (Desulfovibrio salexigens), this protein is Peptide chain release factor 1.